Consider the following 273-residue polypeptide: Zinc finger protein 80 (273 aa).

The segment at 49–71 (YKCKECGSVFNKNSLLVRHQQIH) adopts a C2H2-type 1 zinc-finger fold. A C2H2-type 2; degenerate zinc finger spans residues 77–99 (YEYQECGKAFPEKVDFVRHMRIH). The C2H2-type 3; atypical zinc-finger motif lies at 105 to 127 (CKCVECRKVFNRRSHLLCYRQIH). 4 C2H2-type zinc fingers span residues 133–155 (YECS…RVTH), 161–183 (FGCK…MKIH), 187–211 (KPCK…SMTH), and 217–239 (YECK…TRSH).

It belongs to the krueppel C2H2-type zinc-finger protein family.

The protein resides in the nucleus. Its function is as follows. May be involved in transcriptional regulation. In Pan troglodytes (Chimpanzee), this protein is Zinc finger protein 80 (ZNF80).